A 285-amino-acid polypeptide reads, in one-letter code: Inositol oxygenase (285 aa).

A substrate-binding site is contributed by arginine 29. Position 33 is a phosphoserine (serine 33). 85 to 88 (DESD) is a binding site for substrate. 3 residues coordinate Fe cation: histidine 98, histidine 123, and aspartate 124. Substrate is bound by residues lysine 127 and 141–142 (GD). 3 residues coordinate Fe cation: histidine 194, histidine 220, and aspartate 253. Residue 220–221 (HS) coordinates substrate.

Belongs to the myo-inositol oxygenase family. Requires Fe cation as cofactor. Kidney specific. Renal proximal tubules.

The protein localises to the cytoplasm. The catalysed reaction is myo-inositol + O2 = D-glucuronate + H2O + H(+). The protein operates within polyol metabolism; myo-inositol degradation into D-glucuronate; D-glucuronate from myo-inositol: step 1/1. The polypeptide is Inositol oxygenase (Miox) (Mus musculus (Mouse)).